Here is a 708-residue protein sequence, read N- to C-terminus: Ion-translocating oxidoreductase complex subunit C (708 aa).

4Fe-4S ferredoxin-type domains lie at 369–397 (GEPQ…QQLY) and 407–436 (KATT…VQYF). Residues Cys377, Cys380, Cys383, Cys387, Cys416, Cys419, Cys422, and Cys426 each contribute to the [4Fe-4S] cluster site. The disordered stretch occupies residues 630–682 (AKARKLEQQQANAEPEEQIDPRKAAVEAAIARAKARKLEQQQANAEPEEQIDP).

The protein belongs to the 4Fe4S bacterial-type ferredoxin family. RnfC subfamily. The complex is composed of six subunits: RsxA, RsxB, RsxC, RsxD, RsxE and RsxG. [4Fe-4S] cluster is required as a cofactor.

The protein localises to the cell inner membrane. Its function is as follows. Part of a membrane-bound complex that couples electron transfer with translocation of ions across the membrane. Required to maintain the reduced state of SoxR. This chain is Ion-translocating oxidoreductase complex subunit C, found in Escherichia coli O1:K1 / APEC.